A 232-amino-acid polypeptide reads, in one-letter code: Large ribosomal subunit protein uL16m (232 aa).

The N-terminal 41 residues, 1–41 (MFPYLTRMNLSIKMGGLTLKESSPNAFLNNTTIARRFKHEY), are a transit peptide targeting the mitochondrion.

The protein belongs to the universal ribosomal protein uL16 family. Component of the mitochondrial large ribosomal subunit (mt-LSU). Mature yeast 74S mitochondrial ribosomes consist of a small (37S) and a large (54S) subunit. The 37S small subunit contains a 15S ribosomal RNA (15S mt-rRNA) and 34 different proteins. The 54S large subunit contains a 21S rRNA (21S mt-rRNA) and 46 different proteins.

Its subcellular location is the mitochondrion. Functionally, component of the mitochondrial ribosome (mitoribosome), a dedicated translation machinery responsible for the synthesis of mitochondrial genome-encoded proteins, including at least some of the essential transmembrane subunits of the mitochondrial respiratory chain. The mitoribosomes are attached to the mitochondrial inner membrane and translation products are cotranslationally integrated into the membrane. The polypeptide is Large ribosomal subunit protein uL16m (MRPL16) (Saccharomyces cerevisiae (strain ATCC 204508 / S288c) (Baker's yeast)).